We begin with the raw amino-acid sequence, 291 residues long: Bifunctional protein FolD (291 aa).

NADP(+)-binding positions include 171–173 and isoleucine 239; that span reads GVS.

The protein belongs to the tetrahydrofolate dehydrogenase/cyclohydrolase family. In terms of assembly, homodimer.

It catalyses the reaction (6R)-5,10-methylene-5,6,7,8-tetrahydrofolate + NADP(+) = (6R)-5,10-methenyltetrahydrofolate + NADPH. The enzyme catalyses (6R)-5,10-methenyltetrahydrofolate + H2O = (6R)-10-formyltetrahydrofolate + H(+). It participates in one-carbon metabolism; tetrahydrofolate interconversion. In terms of biological role, catalyzes the oxidation of 5,10-methylenetetrahydrofolate to 5,10-methenyltetrahydrofolate and then the hydrolysis of 5,10-methenyltetrahydrofolate to 10-formyltetrahydrofolate. This chain is Bifunctional protein FolD, found in Xylella fastidiosa (strain Temecula1 / ATCC 700964).